Consider the following 383-residue polypeptide: MHPQAVRPSETLKAFGDKLSMIGVTRITEITHLDRIGIPVFSAIRPTAEDGAVSIYAGKGATRTQARASAMMEAFERYSAERKPEDETFTAHPEDCDGLDPESLILPGSTDLKSELEWINAENLTGDEEVPVPANAVFHPYNPPEGCMSLFRSNTNGLASGNAREEAIFHGLMEVIERDAWSLFEARRGPKVEVDCSGTDNDIISGLLEKFHAAGVEVTLVDLTADTGVATVAAVADDTVLRDPALLTMGVGTHLDPEIAVIRALTEVAQSRATQIHGTREDTVRAEFMRRAGYERMKRLNRHWFSEPEDTITLDEMEDLSTRSFRGDLEITLRKLRESGLEDVFYVDLTRDVGVPVVRVIVPGLEVFSVDPERVGRRIRSSI.

The region spanning 58-383 (GKGATRTQAR…RVGRRIRSSI (326 aa)) is the YcaO domain. Positions 80–100 (AERKPEDETFTAHPEDCDGLD) are disordered.

This is an uncharacterized protein from Methanothermobacter thermautotrophicus (strain ATCC 29096 / DSM 1053 / JCM 10044 / NBRC 100330 / Delta H) (Methanobacterium thermoautotrophicum).